The following is an 834-amino-acid chain: Putative COX1/OXI3 intron 1 protein (834 aa).

The segment at 162-188 (MKDTNNTKGNTKSEGSTERGNSGVDRG) is disordered. Residues 167–181 (NTKGNTKSEGSTERG) are compositionally biased toward polar residues. The Reverse transcriptase domain occupies 296 to 577 (LSNELGTGKF…TPARFLGYNI (282 aa)).

Its subcellular location is the mitochondrion. The sequence is that of Putative COX1/OXI3 intron 1 protein (AI1) from Saccharomyces cerevisiae (strain ATCC 204508 / S288c) (Baker's yeast).